The primary structure comprises 335 residues: 4-hydroxythreonine-4-phosphate dehydrogenase (335 aa).

Positions 135 and 136 each coordinate substrate. Histidine 165, histidine 210, and histidine 265 together coordinate a divalent metal cation. Residues lysine 273, asparagine 282, and arginine 291 each coordinate substrate.

Belongs to the PdxA family. As to quaternary structure, homodimer. Zn(2+) serves as cofactor. The cofactor is Mg(2+). It depends on Co(2+) as a cofactor.

The protein localises to the cytoplasm. The enzyme catalyses 4-(phosphooxy)-L-threonine + NAD(+) = 3-amino-2-oxopropyl phosphate + CO2 + NADH. Its pathway is cofactor biosynthesis; pyridoxine 5'-phosphate biosynthesis; pyridoxine 5'-phosphate from D-erythrose 4-phosphate: step 4/5. Its function is as follows. Catalyzes the NAD(P)-dependent oxidation of 4-(phosphooxy)-L-threonine (HTP) into 2-amino-3-oxo-4-(phosphooxy)butyric acid which spontaneously decarboxylates to form 3-amino-2-oxopropyl phosphate (AHAP). The chain is 4-hydroxythreonine-4-phosphate dehydrogenase from Saccharophagus degradans (strain 2-40 / ATCC 43961 / DSM 17024).